The primary structure comprises 156 residues: Small ribosomal subunit protein uS7 (156 aa).

The protein belongs to the universal ribosomal protein uS7 family. As to quaternary structure, part of the 30S ribosomal subunit. Contacts proteins S9 and S11.

Functionally, one of the primary rRNA binding proteins, it binds directly to 16S rRNA where it nucleates assembly of the head domain of the 30S subunit. Is located at the subunit interface close to the decoding center, probably blocks exit of the E-site tRNA. The protein is Small ribosomal subunit protein uS7 of Herminiimonas arsenicoxydans.